Here is a 538-residue protein sequence, read N- to C-terminus: Putative outer membrane porin BglH (538 aa).

An N-terminal signal peptide occupies residues 1-25 (MFRRNIITSAILLMAPLAFSAQSLA).

It belongs to the porin LamB (TC 1.B.3) family.

The protein resides in the cell outer membrane. Its function is as follows. May be a sugar porin with a broad carbohydrate specificity. The polypeptide is Putative outer membrane porin BglH (bglH) (Escherichia coli O6:K15:H31 (strain 536 / UPEC)).